The primary structure comprises 96 residues: Co-chaperonin GroES (96 aa).

It belongs to the GroES chaperonin family. Heptamer of 7 subunits arranged in a ring. Interacts with the chaperonin GroEL.

The protein resides in the cytoplasm. In terms of biological role, together with the chaperonin GroEL, plays an essential role in assisting protein folding. The GroEL-GroES system forms a nano-cage that allows encapsulation of the non-native substrate proteins and provides a physical environment optimized to promote and accelerate protein folding. GroES binds to the apical surface of the GroEL ring, thereby capping the opening of the GroEL channel. The protein is Co-chaperonin GroES of Wolbachia pipientis wMel.